The chain runs to 149 residues: Protein-export protein SecB (149 aa).

Belongs to the SecB family. In terms of assembly, homotetramer, a dimer of dimers. One homotetramer interacts with 1 SecA dimer.

It localises to the cytoplasm. One of the proteins required for the normal export of preproteins out of the cell cytoplasm. It is a molecular chaperone that binds to a subset of precursor proteins, maintaining them in a translocation-competent state. It also specifically binds to its receptor SecA. This is Protein-export protein SecB from Hydrogenovibrio crunogenus (strain DSM 25203 / XCL-2) (Thiomicrospira crunogena).